Here is an 81-residue protein sequence, read N- to C-terminus: MSKKIGIEQSLSDVEAALKEKGYEVVTMKTEDDAKGCDCCVVTGLDTDMLGISDTMTGASVIQATGLTADEICQQVEQKLQ.

The protein belongs to the UPF0180 family.

In Bacillus licheniformis (strain ATCC 14580 / DSM 13 / JCM 2505 / CCUG 7422 / NBRC 12200 / NCIMB 9375 / NCTC 10341 / NRRL NRS-1264 / Gibson 46), this protein is UPF0180 protein BLi01634/BL05144.